We begin with the raw amino-acid sequence, 274 residues long: Proteasome subunit beta type-5-A (274 aa).

Positions 1-57 (MKLDTSGFETSMPMIGFGSSSDMLDELSSVPSFDLPRTKEFDGFQKKAKDMLKHAKG) are cleaved as a propeptide — removed in mature form. Residue Thr-58 is the Nucleophile of the active site.

The protein belongs to the peptidase T1B family. In terms of assembly, component of the 20S core complex of the 26S proteasome. The 26S proteasome is composed of a core protease (CP), known as the 20S proteasome, capped at one or both ends by the 19S regulatory particle (RP/PA700). The 20S proteasome core is composed of 28 subunits that are arranged in four stacked rings, resulting in a barrel-shaped structure. The two end rings are each formed by seven alpha subunits, and the two central rings are each formed by seven beta subunits. The catalytic chamber with the active sites is on the inside of the barrel. In terms of tissue distribution, ubiquitous low levels, higher expression in siliques and flowers.

It is found in the cytoplasm. Its subcellular location is the nucleus. It catalyses the reaction Cleavage of peptide bonds with very broad specificity.. Its function is as follows. The proteasome is a multicatalytic proteinase complex which is characterized by its ability to cleave peptides with Arg, Phe, Tyr, Leu, and Glu adjacent to the leaving group at neutral or slightly basic pH. The proteasome has an ATP-dependent proteolytic activity. This Arabidopsis thaliana (Mouse-ear cress) protein is Proteasome subunit beta type-5-A (PBE1).